Here is a 335-residue protein sequence, read N- to C-terminus: Tetraacyldisaccharide 4'-kinase (335 aa).

Residue 58–65 (TMGGAGKT) coordinates ATP.

Belongs to the LpxK family.

It carries out the reaction a lipid A disaccharide + ATP = a lipid IVA + ADP + H(+). The protein operates within glycolipid biosynthesis; lipid IV(A) biosynthesis; lipid IV(A) from (3R)-3-hydroxytetradecanoyl-[acyl-carrier-protein] and UDP-N-acetyl-alpha-D-glucosamine: step 6/6. Its function is as follows. Transfers the gamma-phosphate of ATP to the 4'-position of a tetraacyldisaccharide 1-phosphate intermediate (termed DS-1-P) to form tetraacyldisaccharide 1,4'-bis-phosphate (lipid IVA). In Caulobacter vibrioides (strain ATCC 19089 / CIP 103742 / CB 15) (Caulobacter crescentus), this protein is Tetraacyldisaccharide 4'-kinase.